The sequence spans 311 residues: HPr kinase/phosphorylase (311 aa).

Active-site residues include histidine 139 and lysine 160. ATP is bound at residue glycine 154–serine 161. Serine 161 is a binding site for Mg(2+). Aspartate 178 acts as the Proton acceptor; for phosphorylation activity. Proton donor; for dephosphorylation activity in catalysis. Residues isoleucine 202–aspartate 211 form an important for the catalytic mechanism of both phosphorylation and dephosphorylation region. A Mg(2+)-binding site is contributed by glutamate 203. The active site involves arginine 244. An important for the catalytic mechanism of dephosphorylation region spans residues proline 265–arginine 270.

It belongs to the HPrK/P family. As to quaternary structure, homohexamer. The cofactor is Mg(2+).

The catalysed reaction is [HPr protein]-L-serine + ATP = [HPr protein]-O-phospho-L-serine + ADP + H(+). It catalyses the reaction [HPr protein]-O-phospho-L-serine + phosphate + H(+) = [HPr protein]-L-serine + diphosphate. Catalyzes the ATP- as well as the pyrophosphate-dependent phosphorylation of a specific serine residue in HPr, a phosphocarrier protein of the phosphoenolpyruvate-dependent sugar phosphotransferase system (PTS). HprK/P also catalyzes the pyrophosphate-producing, inorganic phosphate-dependent dephosphorylation (phosphorolysis) of seryl-phosphorylated HPr (P-Ser-HPr). The two antagonistic activities of HprK/P are regulated by several intracellular metabolites, which change their concentration in response to the absence or presence of rapidly metabolisable carbon sources (glucose, fructose, etc.) in the growth medium. Therefore, by controlling the phosphorylation state of HPr, HPrK/P is a sensor enzyme that plays a major role in the regulation of carbon metabolism and sugar transport: it mediates carbon catabolite repression (CCR), and regulates PTS-catalyzed carbohydrate uptake and inducer exclusion. This Caldicellulosiruptor bescii (strain ATCC BAA-1888 / DSM 6725 / KCTC 15123 / Z-1320) (Anaerocellum thermophilum) protein is HPr kinase/phosphorylase.